A 294-amino-acid polypeptide reads, in one-letter code: uncharacterized protein (294 aa).

Disordered stretches follow at residues 1–30 (MKRQ…EVSH), 51–86 (ALSD…KKRP), and 250–294 (DELN…STST). Composition is skewed to polar residues over residues 7–26 (QDSM…TPTK), 66–81 (PYSS…NSST), and 255–277 (PMNN…NLPT).

It localises to the nucleus. This is an uncharacterized protein from Schizosaccharomyces pombe (strain 972 / ATCC 24843) (Fission yeast).